The sequence spans 114 residues: Photosystem II reaction center Psb28 protein (114 aa).

The protein belongs to the Psb28 family. In terms of assembly, part of the photosystem II complex.

It localises to the plastid. Its subcellular location is the chloroplast thylakoid membrane. This is Photosystem II reaction center Psb28 protein from Gracilaria tenuistipitata var. liui (Red alga).